The primary structure comprises 196 residues: GTP cyclohydrolase 1 (196 aa).

Positions 86, 89, and 158 each coordinate Zn(2+).

This sequence belongs to the GTP cyclohydrolase I family. As to quaternary structure, toroid-shaped homodecamer, composed of two pentamers of five dimers.

It carries out the reaction GTP + H2O = 7,8-dihydroneopterin 3'-triphosphate + formate + H(+). The protein operates within cofactor biosynthesis; 7,8-dihydroneopterin triphosphate biosynthesis; 7,8-dihydroneopterin triphosphate from GTP: step 1/1. This is GTP cyclohydrolase 1 from Clostridium botulinum (strain Langeland / NCTC 10281 / Type F).